The primary structure comprises 352 residues: Protein Wnt-4a (352 aa).

The N-terminal stretch at 1 to 22 (MSSEYLIRSLLMLFLALFSANA) is a signal peptide. Cystine bridges form between C78-C89, C128-C136, C138-C155, C206-C220, C208-C215, C280-C312, C297-C307, C311-C351, C327-C342, C329-C339, and C334-C335. A glycan (N-linked (GlcNAc...) asparagine) is linked at N88. Residue S212 is the site of O-palmitoleoyl serine; by PORCN attachment. N298 carries N-linked (GlcNAc...) asparagine glycosylation.

This sequence belongs to the Wnt family. In terms of processing, palmitoleoylation is required for efficient binding to frizzled receptors. Depalmitoleoylation leads to Wnt signaling pathway inhibition. In terms of tissue distribution, caudal forebrain and neural keel, the floor plate, the gill slit and the developing pronephros.

The protein localises to the secreted. The protein resides in the extracellular space. It is found in the extracellular matrix. Functionally, ligand for members of the frizzled family of seven transmembrane receptors. Plays an important role in embryonic development. The chain is Protein Wnt-4a (wnt4a) from Danio rerio (Zebrafish).